Consider the following 149-residue polypeptide: Histidine-containing phosphotransfer protein 2 (149 aa).

The 106-residue stretch at 39–144 folds into the HPt domain; sequence TPGFVSEVVT…LQLEQQIQAY (106 aa). Residue His-80 is modified to Phosphohistidine.

In terms of processing, two-component system major event consists of a His-to-Asp phosphorelay between a sensor histidine kinase (HK) and a response regulator (RR). In plants, the His-to-Asp phosphorelay involves an additional intermediate named Histidine-containing phosphotransfer protein (HPt). This multistep phosphorelay consists of a His-Asp-His-Asp sequential transfer of a phosphate group between first a His and an Asp of the HK protein, followed by the transfer to a conserved His of the HPt protein and finally the transfer to an Asp in the receiver domain of the RR protein. In terms of tissue distribution, widely expressed.

Its subcellular location is the cytoplasm. It is found in the cytosol. The protein localises to the nucleus. Functionally, functions as a two-component phosphorelay mediators between cytokinin sensor histidine kinases and response regulators (B-type ARRs). Plays an important role in propagating cytokinin signal transduction through the multistep His-to-Asp phosphorelay. Functions as a positive regulator of the cytokinin signaling pathway. May play a regulatory role in salt and drought tolerance during plant development. This Oryza sativa subsp. japonica (Rice) protein is Histidine-containing phosphotransfer protein 2.